A 292-amino-acid polypeptide reads, in one-letter code: Protein SETSIP (292 aa).

Residues 1–11 (MAPKRQSPLPL) are compositionally biased toward low complexity. 2 disordered regions span residues 1-43 (MAPK…EQQE) and 158-292 (LNES…GEDD). The stretch at 35–78 (KKGEKEQQEAIEHIDEVQNEIDRLNEQDSEEILKVEQKYNKLRQ) forms a coiled coil. Positions 237 to 292 (DMDDEEGGEDDDDDDDDGDEGEEELEDIDEGDEDEGEEDEDDDEGEEGEEDEGEDD) are enriched in acidic residues.

Belongs to the nucleosome assembly protein (NAP) family. Expressed in endothelial cell (EC) and protein-induced pluripotent stem (PiPS) endothelial cell (EC) (at protein level).

The protein resides in the cytoplasm. Its subcellular location is the nucleus. In terms of biological role, plays a role as a transcriptional activator involved in the early stage of somatic cell reprogramming. Promotes the differentiation of protein-induced pluripotent stem (PiPS) cells into endothelial cells and the formation of vascular-like tubes (in vitro). Involved in the transcription induction of vascular endothelial-cadherin (VE-cadherin) expression. Associates to the VE-cadherin gene promoter. This is Protein SETSIP (SETSIP) from Homo sapiens (Human).